Consider the following 267-residue polypeptide: Tryptophan synthase alpha chain (267 aa).

Catalysis depends on proton acceptor residues Glu-49 and Asp-60.

It belongs to the TrpA family. In terms of assembly, tetramer of two alpha and two beta chains.

It catalyses the reaction (1S,2R)-1-C-(indol-3-yl)glycerol 3-phosphate + L-serine = D-glyceraldehyde 3-phosphate + L-tryptophan + H2O. Its pathway is amino-acid biosynthesis; L-tryptophan biosynthesis; L-tryptophan from chorismate: step 5/5. Its function is as follows. The alpha subunit is responsible for the aldol cleavage of indoleglycerol phosphate to indole and glyceraldehyde 3-phosphate. The chain is Tryptophan synthase alpha chain from Chloroflexus aggregans (strain MD-66 / DSM 9485).